A 1249-amino-acid polypeptide reads, in one-letter code: MAGE-like protein 2 (1249 aa).

Positions 1-10 are enriched in polar residues; sequence MSQLSKNLGD. Disordered stretches follow at residues 1 to 50, 134 to 233, 300 to 327, 349 to 378, 410 to 433, 515 to 569, 647 to 679, 714 to 746, 862 to 910, and 930 to 957; these read MSQL…PPID, APGA…AQPP, QPPA…QPMA, PQVP…WQAT, RQGP…VRQA, QALP…LPAP, QPFQ…EVPT, LMTP…RAPS, PQAT…DWQG, and VSGD…ILSG. Pro residues-rich tracts occupy residues 40-49 and 140-233; these read PPVPWDPPPI and AHPP…AQPP. Residues 301–311 are compositionally biased toward low complexity; it reads PPASGAPMAQP. Pro residues-rich tracts occupy residues 312 to 324 and 349 to 358; these read AAPP…PPAQ and PQVPQGPQAP. The segment covering 369 to 378 has biased composition (polar residues); sequence QATSPGWQAT. Residues 410–432 are compositionally biased toward pro residues; the sequence is RQGPPPIRPGPPPIRPGPPPVRQ. The span at 525–552 shows a compositional bias: low complexity; sequence QAPQARLPAPQVQAAPQVPTAPPATQVP. Residues 553-567 are compositionally biased toward pro residues; sequence AAPPAGPQVPQPVLP. Positions 662 to 675 are enriched in low complexity; that stretch reads QLPPQQAQASGPQA. Over residues 725 to 746 the composition is skewed to basic and acidic residues; that stretch reads SIDRRGSSKERRTSSKERRAPS. A compositionally biased stretch (low complexity) spans 862-871; sequence PQATATTQEA. The segment covering 881–891 has biased composition (basic residues); sequence RSGKATRKKKH. The region spanning 1020-1219 is the MAGE domain; the sequence is LDERANALVQ…QSWPFHYLEA (200 aa). Residues 1226 to 1235 show a composition bias toward acidic residues; that stretch reads EDTDEDEPDT. A disordered region spans residues 1226–1249; it reads EDTDEDEPDTGDSAHGPTSRPPPR.

As to quaternary structure, part of a complex consisting of MAGEL2, TRIM27 and USP7; directly interacts with USP7. Interacts with TRIM27. Interacts with VPS35; leading to recruitment at retromer-containing endosomes. Interacts with BMAL1 and PER2. Expressed in placenta, fetal and adult brain. Not detected in heart and small intestine, very low levels in fibroblasts. Not expressed in brain of a Prader-Willi patient.

It is found in the early endosome. It localises to the cytoplasm. The protein localises to the nucleus. Its function is as follows. Probably enhances ubiquitin ligase activity of RING-type zinc finger-containing E3 ubiquitin-protein ligases, possibly through recruitment and/or stabilization of the Ubl-conjugating enzyme (E2) at the E3:substrate complex. Acts as a regulator of retrograde transport via its interaction with VPS35. Recruited to retromer-containing endosomes and promotes the formation of 'Lys-63'-linked polyubiquitin chains at 'Lys-220' of WASHC1 together with TRIM27, leading to promote endosomal F-actin assembly. Regulates the circadian clock by repressing the transcriptional activator activity of the CLOCK-BMAL1 heterodimer. Significantly promotes the cytoplasmic accumulation of CLOCK. This is MAGE-like protein 2 (MAGEL2) from Homo sapiens (Human).